A 487-amino-acid chain; its full sequence is b(0,+)-type amino acid transporter 1 (487 aa).

Residues 1 to 20 (MEETSPRRRREDEKSVHSTE) show a composition bias toward basic and acidic residues. Residues 1-23 (MEETSPRRRREDEKSVHSTEPKT) form a disordered region. Over 1-31 (MEETSPRRRREDEKSVHSTEPKTTSLQKEVG) the chain is Cytoplasmic. Ser-18 bears the Phosphoserine mark. Residues 32–55 (LLSGICIIVGTIIGSGIFISPKSV) traverse the membrane as a helical segment. Residue 43-47 (IIGSG) participates in L-arginine binding. Over 56–62 (LANTESV) the chain is Extracellular. A helical membrane pass occupies residues 63-84 (GPCLIIWAACGVLATLGALCFA). The Cytoplasmic portion of the chain corresponds to 85–110 (ELGTMITKSGGEYPYLMEAFGPIPAY). The chain crosses the membrane as a helical span at residues 111–137 (LFSWTSLIVMKPSSFAIICLSFSEYVC). Residues 138–147 (AAFYLGCRPP) are Extracellular-facing. 2 consecutive transmembrane segments (helical) span residues 148–169 (AVVVKLLAAAAILLITTVNALS) and 170–193 (VRLGSYVQNVFTAAKLVIVAIIII). At 194-217 (SGLVLLAQGNVKNFQNSFEGSQTS) the chain is on the extracellular side. A helical membrane pass occupies residues 218–238 (VGSISLAFYNGLWAYDGWNQL). Asp-233 contributes to the L-arginine binding site. The Cytoplasmic portion of the chain corresponds to 239–251 (NYITEELRNPYRN). Residues 252-274 (LPMAIVIGIPLVTVCYILMNIAY) traverse the membrane as a helical segment. The Extracellular segment spans residues 275–302 (FTVMTPTELLQSQAVAVTFGDRVLYPAS). A helical transmembrane segment spans residues 303–325 (WVVPLFVAFSTIGAANGTCFTAG). The Cytoplasmic segment spans residues 326–351 (RLIYVAGREGHMLKVLSYISVKRLTP). 2 consecutive transmembrane segments (helical) span residues 352–370 (APALVFYGIIAIIYIIPGD) and 371–391 (INSLVNYFSFAAWLFYGMTIL). The Cytoplasmic segment spans residues 392–410 (GLVVMRFTRKDLERPIKVP). The chain crosses the membrane as a helical span at residues 411–431 (IFIPIIVILVSVFLILAPIIS). Residues 432 to 434 (SPA) lie on the Extracellular side of the membrane. A helical transmembrane segment spans residues 435–450 (WEYLYCVLFILSGLIF). The Cytoplasmic portion of the chain corresponds to 451-487 (YFLFVHYKFRWAQKISRPITKHLQMLMEVVPPEKDPE).

The protein belongs to the amino acid-polyamine-organocation (APC) superfamily. Disulfide-linked heterodimer composed of the catalytic light chain subunit SLC7A9 and the heavy chain subunit SLC3A1. The heterodimer is the minimal functional unit. Assembles in heterotetramers (dimers of heterodimers) and higher order oligomers; the oligomerization is mediated by SLC3A1 likely to prevent degradation and facilitate heteromer trafficking to the plasma membrane. Interacts with CAV1. Outer medulla of kidney (at protein level). Kidney and small intestine. In the kidney localized to the apical membrane of the proximal tubules.

It localises to the apical cell membrane. The enzyme catalyses L-leucine(out) + L-arginine(in) = L-leucine(in) + L-arginine(out). It catalyses the reaction L-histidine(out) + L-arginine(in) = L-histidine(in) + L-arginine(out). It carries out the reaction L-arginine(in) + L-phenylalanine(out) = L-arginine(out) + L-phenylalanine(in). The catalysed reaction is L-cysteine(out) + L-arginine(in) = L-cysteine(in) + L-arginine(out). The enzyme catalyses L-cystine(out) + L-arginine(in) = L-cystine(in) + L-arginine(out). It catalyses the reaction L-lysine(out) + L-arginine(in) = L-lysine(in) + L-arginine(out). Associates with SLC3A1 to form a functional transporter complex that mediates the electrogenic exchange between cationic amino acids and neutral amino acids, with a stoichiometry of 1:1. Has system b(0,+)-like activity with high affinity for extracellular cationic amino acids and L-cystine and lower affinity for intracellular neutral amino acids. Substrate exchange is driven by high concentration of intracellular neutral amino acids and the intracellular reduction of L-cystine to L-cysteine. Required for reabsorption of L-cystine and dibasic amino acids across the brush border membrane in renal proximal tubules. This chain is b(0,+)-type amino acid transporter 1 (Slc7a9), found in Rattus norvegicus (Rat).